The chain runs to 433 residues: Adenosylhomocysteinase B (433 aa).

Substrate is bound by residues Thr-57, Asp-132, Glu-157, Lys-187, and Asp-191. Positions 184-351 (SVTKSKFDNL…EGRLVNLGCA (168 aa)) are NAD binding.

This sequence belongs to the adenosylhomocysteinase family. In terms of assembly, homotetramer. NAD(+) serves as cofactor.

The protein resides in the cytoplasm. The catalysed reaction is S-adenosyl-L-homocysteine + H2O = L-homocysteine + adenosine. It participates in amino-acid biosynthesis; L-homocysteine biosynthesis; L-homocysteine from S-adenosyl-L-homocysteine: step 1/1. Catalyzes the hydrolysis of S-adenosyl-L-homocysteine to form adenosine and homocysteine. Binds copper ions. The sequence is that of Adenosylhomocysteinase B (ahcy-b) from Xenopus laevis (African clawed frog).